A 739-amino-acid polypeptide reads, in one-letter code: Phosphoribosylformylglycinamidine synthase subunit PurL (739 aa).

His-54 is an active-site residue. The ATP site is built by Tyr-57 and Lys-96. Mg(2+) is bound at residue Glu-98. Substrate is bound by residues 99-102 (SHNH) and Arg-121. His-100 (proton acceptor) is an active-site residue. Asp-122 contacts Mg(2+). Residue Gln-245 coordinates substrate. Residue Asp-273 coordinates Mg(2+). A substrate-binding site is contributed by 317-319 (ESQ). Residues Asp-500 and Gly-537 each contribute to the ATP site. Asn-538 contacts Mg(2+). A substrate-binding site is contributed by Ser-540.

The protein belongs to the FGAMS family. As to quaternary structure, monomer. Part of the FGAM synthase complex composed of 1 PurL, 1 PurQ and 2 PurS subunits.

It is found in the cytoplasm. The enzyme catalyses N(2)-formyl-N(1)-(5-phospho-beta-D-ribosyl)glycinamide + L-glutamine + ATP + H2O = 2-formamido-N(1)-(5-O-phospho-beta-D-ribosyl)acetamidine + L-glutamate + ADP + phosphate + H(+). It functions in the pathway purine metabolism; IMP biosynthesis via de novo pathway; 5-amino-1-(5-phospho-D-ribosyl)imidazole from N(2)-formyl-N(1)-(5-phospho-D-ribosyl)glycinamide: step 1/2. In terms of biological role, part of the phosphoribosylformylglycinamidine synthase complex involved in the purines biosynthetic pathway. Catalyzes the ATP-dependent conversion of formylglycinamide ribonucleotide (FGAR) and glutamine to yield formylglycinamidine ribonucleotide (FGAM) and glutamate. The FGAM synthase complex is composed of three subunits. PurQ produces an ammonia molecule by converting glutamine to glutamate. PurL transfers the ammonia molecule to FGAR to form FGAM in an ATP-dependent manner. PurS interacts with PurQ and PurL and is thought to assist in the transfer of the ammonia molecule from PurQ to PurL. This is Phosphoribosylformylglycinamidine synthase subunit PurL from Bacillus anthracis (strain A0248).